Consider the following 306-residue polypeptide: Bacitracin transport ATP-binding protein BcrA (306 aa).

The 229-residue stretch at 5–233 (IKTTDLTKMY…NRKYLEFQLS (229 aa)) folds into the ABC transporter domain. 37–44 (GRNGAGKT) serves as a coordination point for ATP.

Belongs to the ABC transporter superfamily.

Functionally, part of the binding-protein-dependent transport system for bacitracin that confer resistance to this antibiotic. Probably responsible for energy coupling to the transport system. This is Bacitracin transport ATP-binding protein BcrA (bcrA) from Bacillus licheniformis.